The chain runs to 281 residues: Probable short-chain type dehydrogenase/reductase blr2146 (281 aa).

10 to 34 contributes to the NAD(+) binding site; the sequence is VVTGAGAGIGKACALAIAREGGRVV. S146 contacts substrate. The active-site Proton acceptor is Y159. The interval 261 to 281 is disordered; sequence GNSRAARPAGETAEADAAPRC.

The protein belongs to the short-chain dehydrogenases/reductases (SDR) family.

This Bradyrhizobium diazoefficiens (strain JCM 10833 / BCRC 13528 / IAM 13628 / NBRC 14792 / USDA 110) protein is Probable short-chain type dehydrogenase/reductase blr2146.